The chain runs to 330 residues: Short chain dehydrogenase macD (330 aa).

The NADP(+) site is built by Lys57, Asp86, Asn113, Tyr204, and Lys208. The Proton donor role is filled by Tyr204. The active-site Lowers pKa of active site Tyr is Lys208.

This sequence belongs to the short-chain dehydrogenases/reductases (SDR) family.

Its pathway is secondary metabolite biosynthesis; terpenoid biosynthesis. Functionally, short chain dehydrogenase; part of the gene cluster that mediates the biosynthesis of macrophorins, isoprenoid epoxycyclohexenones containing cyclized drimane moieties. The first step of the pathway is the synthesis of 6-methylsalicylic acid (6-MSA) by the polyketide synthase macA. 6-MSA is then converted to m-cresol by the decarboxylase macB. The cytochrome P450 monooxygenase macC then catalyzes the oxidation of m-cresol to toluquinol. Epoxidation of toluquinol is then performed by the short chain dehydrogenase macD, with the help of macE, and a further prenylation by macG leads to 7-deacetoxyyanuthone A. The next step is the hydroxylation of C-22 of 7-deacetoxyyanuthone A by the cytochrome P450 monooxygenase macH to yield 22-deacetylyanuthone A. O-Mevalon transferase macI then attaches mevalon to the hydroxyl group of 22-deacetylyanuthone A to produce yanuthone E. The terpene cyclase macJ catalyzes the cyclization of 22-deacetylyanuthone A to macrophorin A. MacJ is also able to catalyze cyclization of yanuthone E and 7-deacetoxyyanuthone A to their corresponding macrophorins. The macJ products can be further modified by macH and macJ, as well as by the FAD-dependent monooxygenase macF, to produce additional macrophorins, including 4'-oxomacrophorin A, 4'-oxomacrophorin D and 4'-oxomacrophorin E. This is Short chain dehydrogenase macD from Penicillium terrestre.